The chain runs to 432 residues: Homogentisate 1,2-dioxygenase (432 aa).

The active-site Proton acceptor is His-287. 2 residues coordinate Fe cation: His-330 and Glu-336. 2 residues coordinate homogentisate: Tyr-345 and His-366. His-366 is a binding site for Fe cation.

Belongs to the homogentisate dioxygenase family. Hexamer; dimer of trimers. The cofactor is Fe cation.

It catalyses the reaction homogentisate + O2 = 4-maleylacetoacetate + H(+). The protein operates within amino-acid degradation; L-phenylalanine degradation; acetoacetate and fumarate from L-phenylalanine: step 4/6. Functionally, involved in the catabolism of homogentisate (2,5-dihydroxyphenylacetate or 2,5-OH-PhAc), a central intermediate in the degradation of phenylalanine and tyrosine. Catalyzes the oxidative ring cleavage of the aromatic ring of homogentisate to yield maleylacetoacetate. The chain is Homogentisate 1,2-dioxygenase from Pseudomonas aeruginosa (strain ATCC 15692 / DSM 22644 / CIP 104116 / JCM 14847 / LMG 12228 / 1C / PRS 101 / PAO1).